The sequence spans 179 residues: Large ribosomal subunit protein uL5 (179 aa).

The protein belongs to the universal ribosomal protein uL5 family. In terms of assembly, part of the 50S ribosomal subunit; part of the 5S rRNA/L5/L18/L25 subcomplex. Contacts the 5S rRNA and the P site tRNA. Forms a bridge to the 30S subunit in the 70S ribosome.

Functionally, this is one of the proteins that bind and probably mediate the attachment of the 5S RNA into the large ribosomal subunit, where it forms part of the central protuberance. In the 70S ribosome it contacts protein S13 of the 30S subunit (bridge B1b), connecting the 2 subunits; this bridge is implicated in subunit movement. Contacts the P site tRNA; the 5S rRNA and some of its associated proteins might help stabilize positioning of ribosome-bound tRNAs. This chain is Large ribosomal subunit protein uL5, found in Francisella tularensis subsp. novicida (strain U112).